The primary structure comprises 111 residues: Rho GDP-dissociation inhibitor 1 (111 aa).

Residues lysine 57 and lysine 60 each participate in a glycyl lysine isopeptide (Lys-Gly) (interchain with G-Cter in SUMO1); alternate cross-link. Glycyl lysine isopeptide (Lys-Gly) (interchain with G-Cter in SUMO2); alternate cross-links involve residues lysine 57 and lysine 60. An N6-acetyllysine; alternate modification is found at lysine 60. The residue at position 60 (lysine 60) is an N6-succinyllysine; alternate.

Belongs to the Rho GDI family. Monomer. Interacts with FER. Interacts with PLXNB3. Forms a heterodimer with RAC1. Interacts with RHOA, the affinity is increased by three orders of magnitude when RHOA is prenylated. Interacts with PSMD10; the interaction increases ARHGDIA association with RHOA, leading to ARHGDIA-mediated inactivation of RHOA and ROCK and prolonged AKT activation. Interacts with KANK2; the interaction is direct and may regulate the interaction of ARHGDIA with RHOA, RAC1 and CDC42. Interacts with RHOC. Interacts with CDC42. Interacts with NGFR (via death domain); NGFR binding decreases the affinity for RHOA. In terms of processing, the N-terminus is blocked.

The protein localises to the cytoplasm. In terms of biological role, controls Rho proteins homeostasis. Regulates the GDP/GTP exchange reaction of the Rho proteins by inhibiting the dissociation of GDP from them, and the subsequent binding of GTP to them. Retains Rho proteins such as CDC42, RAC1 and RHOA in an inactive cytosolic pool, regulating their stability and protecting them from degradation. Actively involved in the recycling and distribution of activated Rho GTPases in the cell, mediates extraction from membranes of both inactive and activated molecules due its exceptionally high affinity for prenylated forms. Through the modulation of Rho proteins, may play a role in cell motility regulation. In glioma cells, inhibits cell migration and invasion by mediating the signals of SEMA5A and PLXNB3 that lead to inactivation of RAC1. The polypeptide is Rho GDP-dissociation inhibitor 1 (ARHGDIA) (Cavia porcellus (Guinea pig)).